We begin with the raw amino-acid sequence, 427 residues long: Glutamate-1-semialdehyde 2,1-aminomutase (427 aa).

Lys265 bears the N6-(pyridoxal phosphate)lysine mark.

The protein belongs to the class-III pyridoxal-phosphate-dependent aminotransferase family. HemL subfamily. In terms of assembly, homodimer. Pyridoxal 5'-phosphate serves as cofactor.

Its subcellular location is the cytoplasm. The enzyme catalyses (S)-4-amino-5-oxopentanoate = 5-aminolevulinate. It functions in the pathway porphyrin-containing compound metabolism; protoporphyrin-IX biosynthesis; 5-aminolevulinate from L-glutamyl-tRNA(Glu): step 2/2. This is Glutamate-1-semialdehyde 2,1-aminomutase from Idiomarina loihiensis (strain ATCC BAA-735 / DSM 15497 / L2-TR).